The primary structure comprises 312 residues: Cytochrome c biogenesis protein CcsA (312 aa).

8 helical membrane passes run 9–29 (ILTH…LITF), 44–64 (GIIV…ISSG), 71–91 (LYES…IPYF), 111–131 (GFAT…VPAL), 143–163 (MILG…LLVI), 216–236 (VISL…VWAN), 251–271 (WAFI…NINL), and 277–297 (AIIA…VNLL).

This sequence belongs to the CcmF/CycK/Ccl1/NrfE/CcsA family. In terms of assembly, may interact with Ccs1.

It is found in the plastid. The protein resides in the chloroplast thylakoid membrane. Functionally, required during biogenesis of c-type cytochromes (cytochrome c6 and cytochrome f) at the step of heme attachment. In Atropa belladonna (Belladonna), this protein is Cytochrome c biogenesis protein CcsA.